The primary structure comprises 188 residues: Ribosome maturation factor RimM (188 aa).

Residues 98–171 (EGEFFQGDLV…RIVIHPPEYV (74 aa)) form the PRC barrel domain.

Belongs to the RimM family. As to quaternary structure, binds ribosomal protein uS19.

Its subcellular location is the cytoplasm. An accessory protein needed during the final step in the assembly of 30S ribosomal subunit, possibly for assembly of the head region. Essential for efficient processing of 16S rRNA. May be needed both before and after RbfA during the maturation of 16S rRNA. It has affinity for free ribosomal 30S subunits but not for 70S ribosomes. In Myxococcus xanthus (strain DK1622), this protein is Ribosome maturation factor RimM.